Consider the following 274-residue polypeptide: Rhamnulose-1-phosphate aldolase (274 aa).

Glutamate 117 is an active-site residue. Positions 141, 143, and 212 each coordinate Zn(2+).

Belongs to the aldolase class II family. RhaD subfamily. In terms of assembly, homotetramer. The cofactor is Zn(2+).

Its subcellular location is the cytoplasm. It carries out the reaction L-rhamnulose 1-phosphate = (S)-lactaldehyde + dihydroxyacetone phosphate. It participates in carbohydrate degradation; L-rhamnose degradation; glycerone phosphate from L-rhamnose: step 3/3. Catalyzes the reversible cleavage of L-rhamnulose-1-phosphate to dihydroxyacetone phosphate (DHAP) and L-lactaldehyde. The polypeptide is Rhamnulose-1-phosphate aldolase (Escherichia coli (strain SMS-3-5 / SECEC)).